We begin with the raw amino-acid sequence, 365 residues long: MTDSQQSKPKHVMMMAAGTGGHVFPALAVAKQLQQQGCQVSWLATPTGMENRLLKDQNIPIYQIDIQGVRGNGVIRKLAAPFKILKATFSAMRYMKQLKVDAVAGFGGYVAGPGGLAARLLGIPVLIHEQNAVAGFTNAQLSRVAKVVCEAFPNTFPASEKVVTTGNPVRREITDILSPKWRYDEREQAGKPLNILIVGGSLGAKALNERLPPALKQLEVPLNIFHQCGQQQVEATQALYADAPANLTVQVLPFIEDMAKAYSEADLIICRAGALTVTEVATAGVAAVFVPLPIAVDDHQTANAKFLADVGAAKICQQSTMTPEVLNQLFTTLMNRQLLTEMAVKARQHAQPNATQHVVDLIQKM.

Residues 19–21, Asn131, Arg170, Ser201, Ile255, 274–279, and Gln300 each bind UDP-N-acetyl-alpha-D-glucosamine; these read TGG and ALTVTE.

The protein belongs to the glycosyltransferase 28 family. MurG subfamily.

It is found in the cell inner membrane. The catalysed reaction is di-trans,octa-cis-undecaprenyl diphospho-N-acetyl-alpha-D-muramoyl-L-alanyl-D-glutamyl-meso-2,6-diaminopimeloyl-D-alanyl-D-alanine + UDP-N-acetyl-alpha-D-glucosamine = di-trans,octa-cis-undecaprenyl diphospho-[N-acetyl-alpha-D-glucosaminyl-(1-&gt;4)]-N-acetyl-alpha-D-muramoyl-L-alanyl-D-glutamyl-meso-2,6-diaminopimeloyl-D-alanyl-D-alanine + UDP + H(+). It participates in cell wall biogenesis; peptidoglycan biosynthesis. Its function is as follows. Cell wall formation. Catalyzes the transfer of a GlcNAc subunit on undecaprenyl-pyrophosphoryl-MurNAc-pentapeptide (lipid intermediate I) to form undecaprenyl-pyrophosphoryl-MurNAc-(pentapeptide)GlcNAc (lipid intermediate II). The protein is UDP-N-acetylglucosamine--N-acetylmuramyl-(pentapeptide) pyrophosphoryl-undecaprenol N-acetylglucosamine transferase of Acinetobacter baumannii (strain AB307-0294).